The chain runs to 1158 residues: MTHGEELGSDVHQDSIVLTYLEGLLMHQAAGGSGTAVDKKSAGHNEEDQNFNISGSAFPTCQSNGPVLNTHTYQGSGMLHLKKARLLQSSEDWNAAKRKRLSDSIMNLNVKKEALLAGMVDSVPKGKQDSTLLASLLQSFSSRLQTVALSQQIRQSLKEQGYALSHDSLKVEKDLRCYGVASSHLKTLLKKSKVKDQKPDTNLPDVTKNLIRDRFAESPHHVGQSGTKVMSEPLSCAARLQAVASMVEKRASPATSPKPSVACSQLALLLSSEAHLQQYSREHALKTQNANQAASERLAAMARLQENGQKDVGSYQLPKGMSSHLNGQARTSSSKLMASKSSATVFQNPMGIIPSSPKNAGYKNSLERNNIKQAANNSLLLHLLKSQTIPKPMNGHSHSERGSIFEESSTPTTIDEYSDNNPSFTDDSSGDESSYSNCVPIDLSCKHRTEKSESDQPVSLDNFTQSLLNTWDPKVPDVDIKEDQDTSKNSKLNSHQKVTLLQLLLGHKNEENVEKNTSPQGVHNDVSKFNTQNYARTSVIESPSTNRTTPVSTPPLLTSSKAGSPINLSQHSLVIKWNSPPYVCSTQSEKLTNTASNHSMDLTKSKDPPGEKPAQNEGAQNSATFSASKLLQNLAQCGMQSSMSVEEQRPSKQLLTGNTDKPIGMIDRLNSPLLSNKTNAVEENKAFSSQPTGPEPGLSGSEIENLLERRTVLQLLLGNPNKGKSEKKEKTPLRDESTQEHSERALSEQILMVKIKSEPCDDLQIPNTNVHLSHDAKSAPFLGMAPAVQRSAPALPVSEDFKSEPVSPQDFSFSKNGLLSRLLRQNQDSYLADDSDRSHRNNEMALLESKNLCMVPKKRKLYTEPLENPFKKMKNNIVDAANNHSAPEVLYGSLLNQEELKFSRNDLEFKYPAGHGSASESEHRSWARESKSFNVLKQLLLSENCVRDLSPHRSNSVADSKKKGHKNNVTNSKPEFSISSLNGLMYSSTQPSSCMDNRTFSYPGVVKTPVSPTFPEHLGCAGSRPESGLLNGCSMPSEKGPIKWVITDAEKNEYEKDSPRLTKTNPILYYMLQKGGNSVTSRETQDKDIWREASSAESVSQVTAKEELLPTAETKASFFNLRSPYNSHMGNNASRPHSANGEVYGLLGSVLTIKKESE.

Residues 1–415 (MTHGEELGSD…EESSTPTTID (415 aa)) form an interaction with ZNF366 region. The LXXLL motif 1 motif lies at 21–25 (LEGLL). The disordered stretch occupies residues 33 to 56 (SGTAVDKKSAGHNEEDQNFNISGS). The segment covering 37–47 (VDKKSAGHNEE) has biased composition (basic and acidic residues). Residues 78-333 (MLHLKKARLL…HLNGQARTSS (256 aa)) form a repression domain 1 region. S104 is modified (phosphoserine). N6-acetyllysine; alternate is present on K111. K111 participates in a covalent cross-link: Glycyl lysine isopeptide (Lys-Gly) (interchain with G-Cter in SUMO2); alternate. The LXXLL motif 2 signature appears at 133–137 (LASLL). At K158 the chain carries N6-acetyllysine. Residue K170 forms a Glycyl lysine isopeptide (Lys-Gly) (interchain with G-Cter in SUMO2) linkage. An LXXLL motif 3 motif is present at residues 185 to 189 (LKTLL). Glycyl lysine isopeptide (Lys-Gly) (interchain with G-Cter in SUMO2) cross-links involve residues K195 and K198. A Phosphothreonine modification is found at T207. S218 is subject to Phosphoserine. The short motif at 266–270 (LALLL) is the LXXLL motif 4 element. K286 and K310 each carry N6-acetyllysine. The residue at position 356 (S356) is a Phosphoserine. K372 participates in a covalent cross-link: Glycyl lysine isopeptide (Lys-Gly) (interchain with G-Cter in SUMO2). S378 is modified (phosphoserine). Residues 380-384 (LLHLL) carry the LXXLL motif 5 motif. The disordered stretch occupies residues 393-435 (MNGHSHSERGSIFEESSTPTTIDEYSDNNPSFTDDSSGDESSY). A compositionally biased stretch (polar residues) spans 406 to 435 (EESSTPTTIDEYSDNNPSFTDDSSGDESSY). Positions 410–700 (TPTTIDEYSD…PTGPEPGLSG (291 aa)) are repression domain 2. The interval 431–472 (DESSYSNCVPIDLSCKHRTEKSESDQPVSLDNFTQSLLNTWD) is required for targeting to small nuclear foci. Positions 440–446 (PIDLSCK) match the CTBP-binding; principal site motif. An N6-acetyllysine mark is found at K446 and K481. A Phosphoserine modification is found at S487. The short motif at 500–504 (LLQLL) is the LXXLL motif 6 element. K508 participates in a covalent cross-link: Glycyl lysine isopeptide (Lys-Gly) (interchain with G-Cter in SUMO2). Phosphoserine is present on S518. N6-acetyllysine is present on K528. The tract at residues 540–563 (IESPSTNRTTPVSTPPLLTSSKAG) is disordered. A Phosphoserine modification is found at S542. Over residues 548–560 (TTPVSTPPLLTSS) the composition is skewed to low complexity. Position 564 is a phosphoserine (S564). Short sequence motifs (CTBP-binding) lie at residues 565-569 (PINLS) and 599-603 (SMDLT). Disordered regions lie at residues 592–622 (TNTA…AQNS) and 641–663 (SSMS…DKPI). The segment covering 601-610 (DLTKSKDPPG) has biased composition (basic and acidic residues). N6-acetyllysine is present on K606. Residues 641–659 (SSMSVEEQRPSKQLLTGNT) are compositionally biased toward polar residues. S671 bears the Phosphoserine mark. Residues 713 to 717 (LQLLL) carry the LXXLL motif 7 motif. Residues 716–745 (LLGNPNKGKSEKKEKTPLRDESTQEHSERA) are disordered. Over residues 723–745 (GKSEKKEKTPLRDESTQEHSERA) the composition is skewed to basic and acidic residues. Residues 735 to 885 (DESTQEHSER…NIVDAANNHS (151 aa)) are repression domain 3. The segment at 753-1158 (VKIKSEPCDD…SVLTIKKESE (406 aa)) is interaction with ZNF366. Residues K756 and K802 each participate in a glycyl lysine isopeptide (Lys-Gly) (interchain with G-Cter in SUMO2) cross-link. At S807 the chain carries Phosphoserine. An LXXLL motif 8 motif is present at residues 819–823 (LSRLL). Glycyl lysine isopeptide (Lys-Gly) (interchain with G-Cter in SUMO2) cross-links involve residues K850 and K901. N6-acetyllysine; alternate is present on K931. A Glycyl lysine isopeptide (Lys-Gly) (interchain with G-Cter in SUMO2); alternate cross-link involves residue K931. The LXXLL motif 9 motif lies at 936-940 (LKQLL). The CTBP-binding signature appears at 946-950 (VRDLS). Residues 950-974 (SPHRSNSVADSKKKGHKNNVTNSKP) form a disordered region. Position 1001 is a phosphoserine (S1001). Positions 1061-1074 (LTKTNPILYYMLQK) match the Ligand-dependent nuclear receptor binding motif. Residues K1105, K1115, and K1154 each participate in a glycyl lysine isopeptide (Lys-Gly) (interchain with G-Cter in SUMO2) cross-link. The segment at 1118–1158 (FFNLRSPYNSHMGNNASRPHSANGEVYGLLGSVLTIKKESE) is repression domain 4.

In terms of assembly, interacts with RARA and RXRB homodimers and RARA/RXRB heterodimers in the presence of ligand. Interacts with HDAC1 and HDAC3 via its N-terminal domain. Interacts with NR2C1 (sumoylated form and via the ligand-binding domain); the interaction results in promoting the repressor activity of NR2C1. Interacts with CTBP1, CTBP2, ESR1, HDAC1, HDAC2, HDAC5, HDAC6, NR2C2, NR3C1, NR3C2, YWHAH, JUN and FOS. Found in a complex with both NR3C1 and YWHAH. Interacts with ZNF366. Interacts with RORA. Acetylation regulates its nuclear translocation and corepressive activity. Acetylation abolishes interaction with CTBP1. Phosphorylation enhances interaction with YWHAH.

Its subcellular location is the nucleus. In terms of biological role, modulates transcriptional activation by steroid receptors such as NR3C1, NR3C2 and ESR1. Also modulates transcriptional repression by nuclear hormone receptors. Positive regulator of the circadian clock gene expression: stimulates transcription of BMAL1, CLOCK and CRY1 by acting as a coactivator for RORA and RORC. Involved in the regulation of ovarian function. Plays a role in renal development. This chain is Nuclear receptor-interacting protein 1 (NRIP1), found in Homo sapiens (Human).